Here is a 458-residue protein sequence, read N- to C-terminus: 3-isopropylmalate dehydratase large subunit (458 aa).

[4Fe-4S] cluster-binding residues include Cys-337, Cys-397, and Cys-400.

This sequence belongs to the aconitase/IPM isomerase family. LeuC type 1 subfamily. Heterodimer of LeuC and LeuD. Requires [4Fe-4S] cluster as cofactor.

It carries out the reaction (2R,3S)-3-isopropylmalate = (2S)-2-isopropylmalate. The protein operates within amino-acid biosynthesis; L-leucine biosynthesis; L-leucine from 3-methyl-2-oxobutanoate: step 2/4. Its function is as follows. Catalyzes the isomerization between 2-isopropylmalate and 3-isopropylmalate, via the formation of 2-isopropylmaleate. The sequence is that of 3-isopropylmalate dehydratase large subunit from Leuconostoc mesenteroides subsp. mesenteroides (strain ATCC 8293 / DSM 20343 / BCRC 11652 / CCM 1803 / JCM 6124 / NCDO 523 / NBRC 100496 / NCIMB 8023 / NCTC 12954 / NRRL B-1118 / 37Y).